We begin with the raw amino-acid sequence, 398 residues long: Acetate kinase (398 aa).

Residue N7 coordinates Mg(2+). K14 serves as a coordination point for ATP. R92 serves as a coordination point for substrate. D149 acts as the Proton donor/acceptor in catalysis. ATP is bound by residues 208–212 (HLGNG), 283–285 (DCR), and 331–335 (GIGEN). Position 385 (E385) interacts with Mg(2+).

This sequence belongs to the acetokinase family. As to quaternary structure, homodimer. Mg(2+) is required as a cofactor. Mn(2+) serves as cofactor.

Its subcellular location is the cytoplasm. It carries out the reaction acetate + ATP = acetyl phosphate + ADP. The protein operates within metabolic intermediate biosynthesis; acetyl-CoA biosynthesis; acetyl-CoA from acetate: step 1/2. In terms of biological role, catalyzes the formation of acetyl phosphate from acetate and ATP. Can also catalyze the reverse reaction. The polypeptide is Acetate kinase (Fusobacterium nucleatum subsp. nucleatum (strain ATCC 25586 / DSM 15643 / BCRC 10681 / CIP 101130 / JCM 8532 / KCTC 2640 / LMG 13131 / VPI 4355)).